Reading from the N-terminus, the 880-residue chain is DNA-directed RNA polymerase subunit Rpo1N (880 aa).

Cys58, Cys61, Cys68, and His71 together coordinate Zn(2+). DsDNA contacts are provided by residues Lys88 and 92–95 (EFLK). Residues Cys98 and Cys101 each coordinate Zn(2+). Residue Lys138 participates in dsDNA binding. Zn(2+)-binding residues include Cys146 and Cys149. DsDNA contacts are provided by residues Lys303, 305 to 310 (KEGRFR), Arg323, and Gln422. Mg(2+) is bound by residues Asp456, Asp458, and Asp460. Zn(2+)-binding residues include Arg573, Cys575, Cys580, and His582. Residues 812 to 822 (RTSQSGYMQRR) and Gln815 each bind dsDNA.

The protein belongs to the RNA polymerase beta' chain family. In terms of assembly, part of the 13-subunit RNA polymerase complex. Rpo1N and Rpo5 form a cleft which docks Rpo13. Interacts with Rpo8 on the periphery of the clamp head. The cofactor is Mg(2+). It depends on Zn(2+) as a cofactor.

It localises to the cytoplasm. The enzyme catalyses RNA(n) + a ribonucleoside 5'-triphosphate = RNA(n+1) + diphosphate. Functionally, DNA-dependent RNA polymerase (RNAP) catalyzes the transcription of DNA into RNA using the four ribonucleoside triphosphates as substrates. Forms the clamp head domain. The sequence is that of DNA-directed RNA polymerase subunit Rpo1N from Saccharolobus shibatae (strain ATCC 51178 / DSM 5389 / JCM 8931 / NBRC 15437 / B12) (Sulfolobus shibatae).